Reading from the N-terminus, the 269-residue chain is Tryptophan synthase alpha chain (269 aa).

Active-site proton acceptor residues include glutamate 49 and aspartate 60.

The protein belongs to the TrpA family. As to quaternary structure, tetramer of two alpha and two beta chains.

The enzyme catalyses (1S,2R)-1-C-(indol-3-yl)glycerol 3-phosphate + L-serine = D-glyceraldehyde 3-phosphate + L-tryptophan + H2O. It functions in the pathway amino-acid biosynthesis; L-tryptophan biosynthesis; L-tryptophan from chorismate: step 5/5. In terms of biological role, the alpha subunit is responsible for the aldol cleavage of indoleglycerol phosphate to indole and glyceraldehyde 3-phosphate. The chain is Tryptophan synthase alpha chain from Pseudomonas putida (strain GB-1).